The chain runs to 406 residues: MGEIFVAGVNFKVAPVEVREKLACSLEETKKVLPILKRETPLEEVMLLSTCNRVEVYAYNFVENSEDLINKLLEIKRLNPSFKRYFFVKRGEEAVYHIFKVASSLDSMVIGEPQIVAQFKEAYRVAKEAGTVGKILNRVYEKALRASKRVRTETGISRSAVSVSYAAVELAKKIFGDLKEAKVLLIGAGEMGELAANYLRRFGAKLHITNRTYERALKLVKELSGNVLRFEELKEYLPLMDIVIVSTGAKDYILKREDFERSVRERHYEPQFVIDIAVPRNVDPEAGNVEGVFLYDIDDLKQVVEENLKERIKEAQRGEIILWDEVKKFMNWYESLKAEPYILELKASVEGKEVSPYIKKLVHRAIKEIKRNPEVADIILRIFKEVEKNEPRRKELSNVYNGTHGA.

Substrate-binding positions include T50–R53, S107, E112–Q114, and Q118. The Nucleophile role is filled by C51. G187 to G192 contributes to the NADP(+) binding site.

Belongs to the glutamyl-tRNA reductase family. In terms of assembly, homodimer.

It catalyses the reaction (S)-4-amino-5-oxopentanoate + tRNA(Glu) + NADP(+) = L-glutamyl-tRNA(Glu) + NADPH + H(+). Its pathway is porphyrin-containing compound metabolism; protoporphyrin-IX biosynthesis; 5-aminolevulinate from L-glutamyl-tRNA(Glu): step 1/2. In terms of biological role, catalyzes the NADPH-dependent reduction of glutamyl-tRNA(Glu) to glutamate 1-semialdehyde (GSA). The polypeptide is Glutamyl-tRNA reductase (Aquifex aeolicus (strain VF5)).